The primary structure comprises 551 residues: Ubiquitin carboxyl-terminal hydrolase 24 (551 aa).

Disordered stretches follow at residues 51-104 and 163-188; these read NSSV…SLRV and NEDFSSDSSSGSIQRKKNLKVPTESV. The USP domain occupies 197–551; that stretch reads RGLINAGNLC…QAYVLFYKQV (355 aa). Cys-206 functions as the Nucleophile in the catalytic mechanism. A compositionally biased stretch (polar residues) spans 329–338; sequence SKSSVISSAN. Residues 329 to 349 form a disordered region; it reads SKSSVISSANDDGDEWETVGP. The active-site Proton acceptor is the His-510.

This sequence belongs to the peptidase C19 family.

The catalysed reaction is Thiol-dependent hydrolysis of ester, thioester, amide, peptide and isopeptide bonds formed by the C-terminal Gly of ubiquitin (a 76-residue protein attached to proteins as an intracellular targeting signal).. Its function is as follows. Recognizes and hydrolyzes the peptide bond at the C-terminal Gly of ubiquitin. Involved in the processing of poly-ubiquitin precursors as well as that of ubiquitinated proteins. The protein is Ubiquitin carboxyl-terminal hydrolase 24 (UBP24) of Arabidopsis thaliana (Mouse-ear cress).